A 310-amino-acid chain; its full sequence is Serine protease 30 (310 aa).

A signal peptide spans 1–21; sequence MESRARCIFLLLLQILTRARG. Residues 22-36 constitute a propeptide, activation peptide; that stretch reads DILPSVCGHSRDAGK. One can recognise a Peptidase S1 domain in the interval 37–277; that stretch reads IVGGQDALEG…YVDWIQRILA (241 aa). An intrachain disulfide couples cysteine 63 to cysteine 79. Residues histidine 78 and aspartate 128 each act as charge relay system in the active site. 3 cysteine pairs are disulfide-bonded: cysteine 161/cysteine 235, cysteine 191/cysteine 214, and cysteine 225/cysteine 253. Serine 229 serves as the catalytic Charge relay system. Asparagine 238 and asparagine 279 each carry an N-linked (GlcNAc...) asparagine glycan. Residue serine 281 is the site of GPI-anchor amidated serine attachment. Positions 282–310 are cleaved as a propeptide — removed in mature form; that stretch reads DAYGYHSSASAAYQMLLPVLLAVALPGSL.

Belongs to the peptidase S1 family. In terms of tissue distribution, expressed primarily in distal gut.

The protein localises to the cell membrane. With respect to regulation, inhibited by aprotinin, leupeptin, benzamidine and soybean trypsin inhibitor. Partially inhibited by PMSF and DFP. Its function is as follows. Selectively cleaves synthetic peptide substrates of trypsin. Activates the epithelial sodium channel ENaC. The polypeptide is Serine protease 30 (Prss30) (Mus musculus (Mouse)).